A 518-amino-acid chain; its full sequence is Phosphoacetylglucosamine mutase 1 (518 aa).

T49 carries the post-translational modification Phosphothreonine. The Phosphoserine intermediate role is filled by S51. 4 residues coordinate Mg(2+): S51, D267, D269, and D271. S51 is modified (phosphoserine). Substrate is bound by residues 360–362 (EAN), 486–490 (RASGT), and R495.

The protein belongs to the phosphohexose mutase family. Requires Mg(2+) as cofactor.

It is found in the cytoplasm. Its subcellular location is the nucleus. It carries out the reaction N-acetyl-alpha-D-glucosamine 1-phosphate = N-acetyl-D-glucosamine 6-phosphate. The protein operates within nucleotide-sugar biosynthesis; UDP-N-acetyl-alpha-D-glucosamine biosynthesis; N-acetyl-alpha-D-glucosamine 1-phosphate from alpha-D-glucosamine 6-phosphate (route I): step 2/2. Its function is as follows. Catalyzes the conversion of GlcNAc-6-P into GlcNAc-1-P during the synthesis of uridine diphosphate/UDP-GlcNAc, which is a biosynthetic precursor of chitin and also supplies the amino sugars for N-linked oligosaccharides of glycoproteins. This is Phosphoacetylglucosamine mutase 1 from Schizosaccharomyces pombe (strain 972 / ATCC 24843) (Fission yeast).